A 117-amino-acid polypeptide reads, in one-letter code: DNA polymerase epsilon subunit 4 (117 aa).

The tract at residues 1–36 is disordered; that stretch reads MAAAAAAGSGTPREEEGPAGEAAASQPQAPTSVPGA. Ala2 bears the N-acetylalanine mark. Thr11 carries the post-translational modification Phosphothreonine. Residues 19 to 30 show a composition bias toward low complexity; that stretch reads AGEAAASQPQAP. The residue at position 25 (Ser25) is a Phosphoserine.

Component of the DNA polymerase epsilon complex consisting of four subunits: the catalytic subunit POLE and the accessory subunits POLE2, POLE3 and POLE4. Interaction with POLE3 is a prerequisite for further binding with POLE and POLE2.

It is found in the nucleus. Its function is as follows. Accessory component of the DNA polymerase epsilon complex. Participates in DNA repair and in chromosomal DNA replication. This Homo sapiens (Human) protein is DNA polymerase epsilon subunit 4 (POLE4).